Reading from the N-terminus, the 1463-residue chain is DNA polymerase III PolC-type (1463 aa).

In terms of domain architecture, Exonuclease spans 425–581 (YVVFDVETTG…YDAEATGRLL (157 aa)).

It belongs to the DNA polymerase type-C family. PolC subfamily.

The protein localises to the cytoplasm. The catalysed reaction is DNA(n) + a 2'-deoxyribonucleoside 5'-triphosphate = DNA(n+1) + diphosphate. Required for replicative DNA synthesis. This DNA polymerase also exhibits 3' to 5' exonuclease activity. The protein is DNA polymerase III PolC-type of Streptococcus pneumoniae serotype 4 (strain ATCC BAA-334 / TIGR4).